A 132-amino-acid polypeptide reads, in one-letter code: Small ribosomal subunit protein uS8 (132 aa).

The protein belongs to the universal ribosomal protein uS8 family. In terms of assembly, part of the 30S ribosomal subunit. Contacts proteins S5 and S12.

Functionally, one of the primary rRNA binding proteins, it binds directly to 16S rRNA central domain where it helps coordinate assembly of the platform of the 30S subunit. This Geobacter sulfurreducens (strain ATCC 51573 / DSM 12127 / PCA) protein is Small ribosomal subunit protein uS8.